We begin with the raw amino-acid sequence, 92 residues long: UPF0250 protein VP0718 (92 aa).

Belongs to the UPF0250 family.

The protein is UPF0250 protein VP0718 of Vibrio parahaemolyticus serotype O3:K6 (strain RIMD 2210633).